We begin with the raw amino-acid sequence, 256 residues long: Nuclear shuttle protein (256 aa).

Positions 21–42 (NYGFKRTFVVKRGDAKRRQTQV) match the Bipartite nuclear localization signal motif. A Nuclear localization signal motif is present at residues 81-96 (QLCKTQPNRSRSYIKL). An interaction with Arabidopsis thaliana NSI protein region spans residues 150-187 (ELFGARIHSLGNLAVTPALKERFYILHVLKRVISVEKD).

It belongs to the begomovirus nuclear shuttle protein family. As to quaternary structure, binds to single-stranded and double-stranded viral DNA. Interacts with the host nuclear shuttle interacting (NSI) protein. This interaction may allow NSP to recruit NSI monomers to the viral genome and thus regulate nuclear export of viral genome by NSP.

The protein resides in the host nucleus. It localises to the host cytoplasm. It is found in the host cell membrane. Binds to the genomic viral ssDNA, shuttles it into and out of the cell nucleus. Begomoviruses use 2 proteins to transport their DNA from cell to cell. The nuclear shuttle protein (NSP) shuttles it between nucleus and cytoplasm and the movement protein (MP) probably transports the DNA-NSP complex to the cell periphery and facilitates movement across the cell wall. This is Nuclear shuttle protein from Pepper huasteco yellow vein virus (PHYVV).